The primary structure comprises 445 residues: GTPase Der (445 aa).

2 consecutive EngA-type G domains span residues 3–166 (PVIA…AERV) and 180–353 (IRIG…ESCY). GTP is bound by residues 9 to 16 (GRPNVGKS), 56 to 60 (DTGGI), 118 to 121 (NKTD), 186 to 193 (GRPNVGKS), 233 to 237 (DTAGI), and 298 to 301 (NKWD). Residues 354 to 438 (AKWTTNRLTR…PIIFEFKSAE (85 aa)) enclose the KH-like domain.

This sequence belongs to the TRAFAC class TrmE-Era-EngA-EngB-Septin-like GTPase superfamily. EngA (Der) GTPase family. In terms of assembly, associates with the 50S ribosomal subunit.

Functionally, GTPase that plays an essential role in the late steps of ribosome biogenesis. The chain is GTPase Der from Marinomonas sp. (strain MWYL1).